The primary structure comprises 108 residues: Glutaredoxin-1 (108 aa).

In terms of domain architecture, Glutaredoxin spans 3–106 (EEFVQQRLAN…DILSSIGVLR (104 aa)). Cysteine 23 and cysteine 26 are oxidised to a cystine.

The protein belongs to the glutaredoxin family.

Its subcellular location is the virion. Functionally, displays thioltransferase and dehydroascorbate reductase activities. The protein is Glutaredoxin-1 (OPG075) of Vaccinia virus (strain Copenhagen) (VACV).